The following is a 651-amino-acid chain: Far upstream element-binding protein 1 (651 aa).

Disordered stretches follow at residues 1-24 (MADY…GVVN) and 40-92 (KIGG…HQQQ). N-acetylalanine is present on Ala-2. Ser-48 and Ser-51 each carry phosphoserine. Residues 61–73 (RPLEDGDQPDAKK) are compositionally biased toward basic and acidic residues. 3 consecutive KH domains span residues 96 to 160 (VMTE…KRLL), 181 to 247 (NAVQ…KEMV), and 271 to 335 (NEGI…AEII). Ser-136 bears the Phosphoserine mark. Thr-149 carries the phosphothreonine modification. Omega-N-methylarginine is present on residues Arg-317, Arg-355, Arg-357, and Arg-359. Residues 372-439 (LQEFNFIVPT…QQIDYARQLI (68 aa)) form the KH 4 domain. At Ser-411 the chain carries Phosphoserine. Thr-428 bears the Phosphothreonine mark. Disordered stretches follow at residues 443 to 528 (IGGP…GADP), 545 to 574 (AQPP…APAG), and 625 to 651 (TSPQ…HHLY). Positions 464–501 (PHGPPGPPGPGTPMGPYNPAPYNPGPPGPAPHGPPAPY) are enriched in pro residues. 2 stretches are compositionally biased toward low complexity: residues 514-528 (QQQA…GADP) and 552-574 (PAGA…APAG). Ser-626 carries the post-translational modification Phosphoserine.

As to quaternary structure, found in a complex with PUF60 and far upstream element (FUSE) DNA segment. Interacts with PUF60 and JTV1. In terms of processing, ubiquitinated. This targets the protein for proteasome-mediated degradation.

The protein resides in the nucleus. Regulates MYC expression by binding to a single-stranded far-upstream element (FUSE) upstream of the MYC promoter. May act both as activator and repressor of transcription. The polypeptide is Far upstream element-binding protein 1 (Fubp1) (Mus musculus (Mouse)).